The primary structure comprises 443 residues: Probable glycine dehydrogenase (decarboxylating) subunit 1 (443 aa).

It belongs to the GcvP family. N-terminal subunit subfamily. In terms of assembly, the glycine cleavage system is composed of four proteins: P, T, L and H. In this organism, the P 'protein' is a heterodimer of two subunits.

It carries out the reaction N(6)-[(R)-lipoyl]-L-lysyl-[glycine-cleavage complex H protein] + glycine + H(+) = N(6)-[(R)-S(8)-aminomethyldihydrolipoyl]-L-lysyl-[glycine-cleavage complex H protein] + CO2. In terms of biological role, the glycine cleavage system catalyzes the degradation of glycine. The P protein binds the alpha-amino group of glycine through its pyridoxal phosphate cofactor; CO(2) is released and the remaining methylamine moiety is then transferred to the lipoamide cofactor of the H protein. The protein is Probable glycine dehydrogenase (decarboxylating) subunit 1 of Nitratidesulfovibrio vulgaris (strain DP4) (Desulfovibrio vulgaris).